The chain runs to 335 residues: DNA polymerase beta (335 aa).

Lys-41 is covalently cross-linked (Glycyl lysine isopeptide (Lys-Gly) (interchain with G-Cter in ubiquitin)). K(+) is bound at residue Lys-60. Lys-60 contacts Na(+). Lys-61 participates in a covalent cross-link: Glycyl lysine isopeptide (Lys-Gly) (interchain with G-Cter in ubiquitin). The K(+) site is built by Leu-62 and Val-65. Na(+)-binding residues include Leu-62 and Val-65. Lys-72 acts as the Nucleophile; Schiff-base intermediate with DNA; for 5'-dRP lyase activity in catalysis. Lys-72 bears the N6-acetyllysine mark. Lys-81 participates in a covalent cross-link: Glycyl lysine isopeptide (Lys-Gly) (interchain with G-Cter in ubiquitin). Arg-83 is modified (omega-N-methylarginine; by PRMT6). Thr-101, Val-103, and Ile-106 together coordinate K(+). 3 residues coordinate Na(+): Thr-101, Val-103, and Ile-106. Arg-149 contributes to the a 2'-deoxyribonucleoside 5'-triphosphate binding site. At Arg-152 the chain carries Omega-N-methylarginine; by PRMT6. 4 residues coordinate a 2'-deoxyribonucleoside 5'-triphosphate: Ser-180, Arg-183, Gly-189, and Asp-190. A DNA-binding region spans residues 183-192 (RGAESSGDMD). Positions 190, 192, and 256 each coordinate Mg(2+).

Belongs to the DNA polymerase type-X family. Monomer. Binds single-stranded DNA (ssDNA). Interacts with APEX1, LIG1, LIG3, FEN1, PCNA and XRCC1. Interacts with HUWE1/ARF-BP1, STUB1/CHIP and USP47. Interacts with FAM168A. Requires Mg(2+) as cofactor. In terms of processing, methylation by PRMT6 stimulates the polymerase activity by enhancing DNA binding and processivity. Ubiquitinated at Lys-41, Lys-61 and Lys-81: monoubiquitinated by HUWE1/ARF-BP1. Monoubiquitinated protein is then the target of STUB1/CHIP, which catalyzes polyubiquitination from monoubiquitin, leading to degradation by the proteasome. USP47 mediates the deubiquitination of monoubiquitinated protein, preventing polyubiquitination by STUB1/CHIP and its subsequent degradation.

The protein resides in the nucleus. It is found in the cytoplasm. The enzyme catalyses DNA(n) + a 2'-deoxyribonucleoside 5'-triphosphate = DNA(n+1) + diphosphate. It catalyses the reaction a 5'-end 2'-deoxyribose-2'-deoxyribonucleotide-DNA = (2E,4S)-4-hydroxypenten-2-al-5-phosphate + a 5'-end 5'-phospho-2'-deoxyribonucleoside-DNA + H(+). The catalysed reaction is 2'-deoxyribonucleotide-(2'-deoxyribose 5'-phosphate)-2'-deoxyribonucleotide-DNA = a 3'-end 2'-deoxyribonucleotide-(2,3-dehydro-2,3-deoxyribose 5'-phosphate)-DNA + a 5'-end 5'-phospho-2'-deoxyribonucleoside-DNA + H(+). Its function is as follows. Repair polymerase that plays a key role in base-excision repair. During this process, the damaged base is excised by specific DNA glycosylases, the DNA backbone is nicked at the abasic site by an apurinic/apyrimidic (AP) endonuclease, and POLB removes 5'-deoxyribose-phosphate from the preincised AP site acting as a 5'-deoxyribose-phosphate lyase (5'-dRP lyase); through its DNA polymerase activity, it adds one nucleotide to the 3' end of the arising single-nucleotide gap. Conducts 'gap-filling' DNA synthesis in a stepwise distributive fashion rather than in a processive fashion as for other DNA polymerases. It is also able to cleave sugar-phosphate bonds 3' to an intact AP site, acting as an AP lyase. In Rattus norvegicus (Rat), this protein is DNA polymerase beta (Polb).